We begin with the raw amino-acid sequence, 245 residues long: 8-amino-3,8-dideoxy-manno-octulosonate cytidylyltransferase (245 aa).

Belongs to the KdsB family.

It localises to the cytoplasm. The catalysed reaction is 8-amino-3,8-dideoxy-alpha-D-manno-octulosonate + CTP = CMP-8-amino-3,8-dideoxy-alpha-D-manno-oct-2-ulosonate + diphosphate. It participates in bacterial outer membrane biogenesis; lipopolysaccharide biosynthesis. Activates KDO8N (a required 8-carbon sugar) for incorporation into bacterial lipopolysaccharide in the Shewanella genus. The protein is 8-amino-3,8-dideoxy-manno-octulosonate cytidylyltransferase of Shewanella putrefaciens (strain CN-32 / ATCC BAA-453).